Consider the following 316-residue polypeptide: MDVLLANPRGFCAGVDRAIEIVKRAIETLGAPIYVRHEVVHNRFVVDDLKQRGAIFVEELDEVPDDATVIFSAHGVSQAVRQEAERRGLKVFDATCPLVTKVHFEVARHCRAGRDVVLIGHAGHPEVEGTMGQWSRERGAGTIYLVEDIEQVATLDVRQPDNLAYTTQTTLSVDDTMGIIEALRARYPAMQGPRHDDICYATQNRQDAVRDLARQCDLVLVVGSPNSSNSNRLSELARRDGVESYLIDNASEIDPAWIVGKQHIGLTAGASAPQVLVDGVLERLRELGAAGVSELEGEPESMVFALPKELRLRLVS.

Position 12 (C12) interacts with [4Fe-4S] cluster. (2E)-4-hydroxy-3-methylbut-2-enyl diphosphate-binding residues include H41 and H74. Residues H41 and H74 each coordinate dimethylallyl diphosphate. Residues H41 and H74 each contribute to the isopentenyl diphosphate site. C96 is a [4Fe-4S] cluster binding site. Residue H124 coordinates (2E)-4-hydroxy-3-methylbut-2-enyl diphosphate. H124 is a dimethylallyl diphosphate binding site. Position 124 (H124) interacts with isopentenyl diphosphate. The active-site Proton donor is E126. Residue T169 coordinates (2E)-4-hydroxy-3-methylbut-2-enyl diphosphate. Position 199 (C199) interacts with [4Fe-4S] cluster. Residues S227, S228, N229, and S271 each coordinate (2E)-4-hydroxy-3-methylbut-2-enyl diphosphate. Dimethylallyl diphosphate contacts are provided by S227, S228, N229, and S271. Isopentenyl diphosphate-binding residues include S227, S228, N229, and S271.

This sequence belongs to the IspH family. The cofactor is [4Fe-4S] cluster.

It catalyses the reaction isopentenyl diphosphate + 2 oxidized [2Fe-2S]-[ferredoxin] + H2O = (2E)-4-hydroxy-3-methylbut-2-enyl diphosphate + 2 reduced [2Fe-2S]-[ferredoxin] + 2 H(+). The catalysed reaction is dimethylallyl diphosphate + 2 oxidized [2Fe-2S]-[ferredoxin] + H2O = (2E)-4-hydroxy-3-methylbut-2-enyl diphosphate + 2 reduced [2Fe-2S]-[ferredoxin] + 2 H(+). It participates in isoprenoid biosynthesis; dimethylallyl diphosphate biosynthesis; dimethylallyl diphosphate from (2E)-4-hydroxy-3-methylbutenyl diphosphate: step 1/1. It functions in the pathway isoprenoid biosynthesis; isopentenyl diphosphate biosynthesis via DXP pathway; isopentenyl diphosphate from 1-deoxy-D-xylulose 5-phosphate: step 6/6. Catalyzes the conversion of 1-hydroxy-2-methyl-2-(E)-butenyl 4-diphosphate (HMBPP) into a mixture of isopentenyl diphosphate (IPP) and dimethylallyl diphosphate (DMAPP). Acts in the terminal step of the DOXP/MEP pathway for isoprenoid precursor biosynthesis. The protein is 4-hydroxy-3-methylbut-2-enyl diphosphate reductase of Xanthomonas axonopodis pv. citri (strain 306).